Here is a 254-residue protein sequence, read N- to C-terminus: UPF0246 protein FTH_1656 (254 aa).

Belongs to the UPF0246 family.

The polypeptide is UPF0246 protein FTH_1656 (Francisella tularensis subsp. holarctica (strain OSU18)).